Reading from the N-terminus, the 236-residue chain is Glycoprotein U23 (236 aa).

Positions Met1 to Met17 are cleaved as a signal peptide. N-linked (GlcNAc...) asparagine; by host glycans are attached at residues Asn67, Asn80, and Asn103. Residues Leu184 to Leu204 form a helical membrane-spanning segment.

It is found in the membrane. The protein is Glycoprotein U23 (U23) of Human herpesvirus 6A (strain Uganda-1102) (HHV-6 variant A).